Reading from the N-terminus, the 288-residue chain is Energy-coupling factor transporter ATP-binding protein EcfA2 (288 aa).

Residues 3 to 245 form the ABC transporter domain; sequence IEFKNVDYIY…PDWLKKHFLD (243 aa). 40–47 is an ATP binding site; the sequence is GHTGSGKS.

It belongs to the ABC transporter superfamily. Energy-coupling factor EcfA family. As to quaternary structure, forms a stable energy-coupling factor (ECF) transporter complex composed of 2 membrane-embedded substrate-binding proteins (S component), 2 ATP-binding proteins (A component) and 2 transmembrane proteins (T component).

The protein resides in the cell membrane. Functionally, ATP-binding (A) component of a common energy-coupling factor (ECF) ABC-transporter complex. Unlike classic ABC transporters this ECF transporter provides the energy necessary to transport a number of different substrates. In Lactobacillus gasseri (strain ATCC 33323 / DSM 20243 / BCRC 14619 / CIP 102991 / JCM 1131 / KCTC 3163 / NCIMB 11718 / NCTC 13722 / AM63), this protein is Energy-coupling factor transporter ATP-binding protein EcfA2.